We begin with the raw amino-acid sequence, 117 residues long: UPF0342 protein lmo2223 (117 aa).

This sequence belongs to the UPF0342 family.

This is UPF0342 protein lmo2223 from Listeria monocytogenes serovar 1/2a (strain ATCC BAA-679 / EGD-e).